A 91-amino-acid chain; its full sequence is Small ribosomal subunit protein bS20 (91 aa).

A disordered region spans residues 1-28 (MPNIKSAIKRTKTIEKRRAHRASQKSDL). The segment covering 7–23 (AIKRTKTIEKRRAHRAS) has biased composition (basic residues).

It belongs to the bacterial ribosomal protein bS20 family.

Its function is as follows. Binds directly to 16S ribosomal RNA. The protein is Small ribosomal subunit protein bS20 of Brevibacillus brevis (strain 47 / JCM 6285 / NBRC 100599).